Consider the following 331-residue polypeptide: Mitochondrial carrier protein CoAc1 (331 aa).

6 consecutive transmembrane segments (helical) span residues 16–36 (LVDTLPVLAKTLIAGGAAGAI), 79–99 (FYKGNGASVIRIIPYAALHYM), 123–143 (LVAGSAAGGTAVLCTYPLDLA), 193–213 (GIGPTLIGILPYAGLKFYIYE), 231–251 (LPCGALAGLFGQTITYPLDVV), and 292–312 (FAGLSINYIKIVPSVAIGFTV). 3 Solcar repeats span residues 21–107 (PVLA…YRDW), 117–218 (SGPI…LKRH), and 225–319 (NSVR…MKSW).

The protein belongs to the mitochondrial carrier (TC 2.A.29) family. Expressed throughout the plant.

It localises to the mitochondrion inner membrane. Functionally, required for the accumulation of coenzyme A in the mitochondrial matrix. The protein is Mitochondrial carrier protein CoAc1 of Arabidopsis thaliana (Mouse-ear cress).